The following is a 276-amino-acid chain: NADPH-dependent 7-cyano-7-deazaguanine reductase (276 aa).

83-85 (IES) contributes to the substrate binding site. 85-86 (SK) contacts NADPH. Cys184 acts as the Thioimide intermediate in catalysis. The active-site Proton donor is Asp191. Residue 223–224 (HE) coordinates substrate. Residue 252-253 (RG) coordinates NADPH.

This sequence belongs to the GTP cyclohydrolase I family. QueF type 2 subfamily. Homodimer.

The protein localises to the cytoplasm. It carries out the reaction 7-aminomethyl-7-carbaguanine + 2 NADP(+) = 7-cyano-7-deazaguanine + 2 NADPH + 3 H(+). The protein operates within tRNA modification; tRNA-queuosine biosynthesis. Catalyzes the NADPH-dependent reduction of 7-cyano-7-deazaguanine (preQ0) to 7-aminomethyl-7-deazaguanine (preQ1). The polypeptide is NADPH-dependent 7-cyano-7-deazaguanine reductase (Ectopseudomonas mendocina (strain ymp) (Pseudomonas mendocina)).